We begin with the raw amino-acid sequence, 538 residues long: Low affinity inorganic phosphate transporter 3 (538 aa).

Over 1–24 the chain is Cytoplasmic; that stretch reads MAKDQLQVLNALDVAKTQLYHFTA. A helical membrane pass occupies residues 25–45; the sequence is IVIAGMGFFTDAYDLFCISLV. The Extracellular portion of the chain corresponds to 46 to 70; sequence TKLLGRIYYFHEGAPKPGILPSGIS. The chain crosses the membrane as a helical span at residues 71–91; sequence AAVNGVAFIGTLSGQLFFGWL. The Cytoplasmic portion of the chain corresponds to 92–99; sequence GDKLGRKK. The chain crosses the membrane as a helical span at residues 100-120; the sequence is VYGMTLMLMVICSIACGLSFG. Residues 121–122 lie on the Extracellular side of the membrane; sequence KT. The chain crosses the membrane as a helical span at residues 123 to 143; the sequence is ANGVIATLCFFRFWLGFGIGG. Residues 144–164 are Cytoplasmic-facing; sequence DYPLSATIMSEYANKKTRGAF. A helical membrane pass occupies residues 165 to 185; it reads IAAVFAMQGFGILAGGIVALI. The Extracellular portion of the chain corresponds to 186–211; sequence VSAGFKNAYPAPTYSAHGKDSTPPEA. Residues 212 to 232 traverse the membrane as a helical segment; the sequence is DYVWRIIVMIGALPALLTYYW. The Cytoplasmic portion of the chain corresponds to 233-292; it reads RMKMPETARYTALVAKNTVKAAADMSKVLNVEIEEDKATVEKIEENGNSFGLFSKEFLRR. A helical transmembrane segment spans residues 293–313; sequence HGLHLLGTTSTWFLLDIAFYS. Topologically, residues 314–345 are extracellular; sequence QNLFQKDIFSKIGWIPPPETMNALDEVFRIAR. A helical transmembrane segment spans residues 346 to 366; it reads AQTLIALCSTVPGYWFTVAFI. The Cytoplasmic segment spans residues 367–371; it reads DKMGR. Residues 372-392 traverse the membrane as a helical segment; the sequence is FAIQLMGSFFMTVFMFALAIP. Residues 393–402 are Extracellular-facing; the sequence is YDHWTKKENR. The helical transmembrane segment at 403–423 threads the bilayer; it reads IGFVIMYSLTFFFANFGPNAT. Over 424–442 the chain is Cytoplasmic; the sequence is TFVVPAEIFPARLRSTCHG. A helical membrane pass occupies residues 443-463; sequence ISAAAGKAGAIVGAFGFLYAA. The Extracellular portion of the chain corresponds to 464-483; it reads QSTDPKKVDAGYPTGIGVKN. The helical transmembrane segment at 484-504 threads the bilayer; sequence ALIVLGCVNFLGMLSTLLVPE. At 505 to 538 the chain is on the cytoplasmic side; it reads SKGKSLEEMSKENEGEEENYGTETKGENAQTVPV. The span at 506–517 shows a compositional bias: basic and acidic residues; the sequence is KGKSLEEMSKEN. Residues 506-538 are disordered; sequence KGKSLEEMSKENEGEEENYGTETKGENAQTVPV.

The protein belongs to the major facilitator superfamily. Phosphate:H(+) symporter (TC 2.A.1.9) family. Expressed at low levels in non-mycorrhized roots.

It localises to the cell membrane. The catalysed reaction is phosphate(in) + H(+)(in) = phosphate(out) + H(+)(out). Functionally, low-affinity transporter for external inorganic phosphate (Pi) probably involved in the acquisition of phosphate released by arbuscular mycorrhizal (AM) fungi during AM symbiosis. In Petunia hybrida (Petunia), this protein is Low affinity inorganic phosphate transporter 3.